Reading from the N-terminus, the 193-residue chain is Large ribosomal subunit protein eL18 (193 aa).

Residues histidine 158 to lysine 193 are disordered. Over residues serine 183–lysine 193 the composition is skewed to basic residues.

This sequence belongs to the eukaryotic ribosomal protein eL18 family.

It is found in the cytoplasm. The sequence is that of Large ribosomal subunit protein eL18 (RPL18) from Trypanosoma cruzi (strain CL Brener).